The primary structure comprises 578 residues: DNA mismatch repair protein MutL (578 aa).

It belongs to the DNA mismatch repair MutL/HexB family.

Its function is as follows. This protein is involved in the repair of mismatches in DNA. It is required for dam-dependent methyl-directed DNA mismatch repair. May act as a 'molecular matchmaker', a protein that promotes the formation of a stable complex between two or more DNA-binding proteins in an ATP-dependent manner without itself being part of a final effector complex. This is DNA mismatch repair protein MutL from Carboxydothermus hydrogenoformans (strain ATCC BAA-161 / DSM 6008 / Z-2901).